Consider the following 472-residue polypeptide: 2-oxoisovalerate dehydrogenase subunit alpha 1, mitochondrial (472 aa).

The transit peptide at 1–56 (MAIWFARSKTLVSSLRHNLNLSTILIKRDYSHRPIFYTTSQLSSTAYLSPFGSLRH) directs the protein to the mitochondrion. 185-187 (QYR) is a binding site for thiamine diphosphate. K(+)-binding residues include S234, T239, and Q240.

This sequence belongs to the BCKDHA family. As to quaternary structure, heterotetramer of alpha and beta chains. Requires thiamine diphosphate as cofactor.

The protein resides in the mitochondrion matrix. The catalysed reaction is N(6)-[(R)-lipoyl]-L-lysyl-[protein] + 3-methyl-2-oxobutanoate + H(+) = N(6)-[(R)-S(8)-2-methylpropanoyldihydrolipoyl]-L-lysyl-[protein] + CO2. Its function is as follows. The branched-chain alpha-keto dehydrogenase complex catalyzes the overall conversion of alpha-keto acids to acyl-CoA and CO(2). It contains multiple copies of three enzymatic components: branched-chain alpha-keto acid decarboxylase (E1), lipoamide acyltransferase (E2) and lipoamide dehydrogenase (E3). Required during sugar starvation. The protein is 2-oxoisovalerate dehydrogenase subunit alpha 1, mitochondrial of Arabidopsis thaliana (Mouse-ear cress).